Consider the following 145-residue polypeptide: MPTRFKKTRHQRGSTFCGYGRVGKHRKHPSGRGNAGGEHHHRINFRKYHPGYFGKCGMNHYHKKKNTTWKPTINLDNLTKLMAKDEAMKAKKGEVLPVIDLLANGYSKLLGNGHLQAPCIVKARWVSKLADKKIRKAGGAVVLQA.

The interval 20-39 (GRVGKHRKHPSGRGNAGGEH) is disordered.

It belongs to the universal ribosomal protein uL15 family.

The polypeptide is Large ribosomal subunit protein uL15 (RPL27A) (Trypanosoma brucei brucei).